A 242-amino-acid chain; its full sequence is Protein unc-119 homolog B-A (242 aa).

Residues 1-20 are compositionally biased toward basic and acidic residues; that stretch reads MSGSKREAALTGQPKDERKK. Positions 1–49 are disordered; sequence MSGSKREAALTGQPKDERKKSGGGVINRLKARRVQGKESGTSDQSSVTP. The segment covering 38-48 has biased composition (polar residues); that stretch reads ESGTSDQSSVT. Tetradecanoate is bound at residue Tyr133.

It belongs to the PDE6D/unc-119 family.

In terms of biological role, myristoyl-binding protein that acts as a cargo adapter: specifically binds the myristoyl moiety of a subset of N-terminally myristoylated proteins and is required for their localization. Plays a key role in localization of proteins to the primary cilium membrane. This chain is Protein unc-119 homolog B-A (unc119b-a), found in Xenopus laevis (African clawed frog).